Here is a 299-residue protein sequence, read N- to C-terminus: Methionine aminopeptidase (299 aa).

Histidine 64 lines the substrate pocket. A divalent metal cation-binding residues include aspartate 84, aspartate 95, and histidine 158. A substrate-binding site is contributed by histidine 166. A divalent metal cation is bound by residues glutamate 191 and glutamate 284.

This sequence belongs to the peptidase M24A family. Methionine aminopeptidase archaeal type 2 subfamily. Monomer. The cofactor is Co(2+). Zn(2+) is required as a cofactor. Requires Mn(2+) as cofactor. It depends on Fe(2+) as a cofactor.

The enzyme catalyses Release of N-terminal amino acids, preferentially methionine, from peptides and arylamides.. Its function is as follows. Removes the N-terminal methionine from nascent proteins. The N-terminal methionine is often cleaved when the second residue in the primary sequence is small and uncharged (Met-Ala-, Cys, Gly, Pro, Ser, Thr, or Val). This Methanothermobacter thermautotrophicus (strain ATCC 29096 / DSM 1053 / JCM 10044 / NBRC 100330 / Delta H) (Methanobacterium thermoautotrophicum) protein is Methionine aminopeptidase.